Reading from the N-terminus, the 549-residue chain is MATPRGLGALLLLLLLPTSGQEKPTEGPRNTCLGSNNMYDIFNLNDKALCFTKCRQSGSDSCNVENLQRYWLNYEAHLMKEGLTQKVNTPFLKALVQNLSTNTAEDFYFSLEPSQVPRQVMKDEDKPPDRVRLPKSLFRSLPGNRSVVRLAVTILDIGPGTLFKGPRLGLGDGSGVLNNRLVGLSVGQMHVTKLAEPLEIVFSHQRPPPNMTLTCVFWDVTKGTTGDWSSEGCSTEVRPEGTVCCCDHLTFFALLLRPTLDQSTVHILTRISQAGCGVSMIFLAFTIILYAFLRLSRERFKSEDAPKIHVALGGSLFLLNLAFLVNVGSGSKGSDAACWARGAVFHYFLLCAFTWMGLEAFHLYLLAVRVFNTYFGHYFLKLSLVGWGLPALMVIGTGSANSYGLYTIRDRENRTSLELCWFREGTTMYALYITVHGYFLITFLFGMVVLALVVWKIFTLSRATAVKERGKNRKKVLTLLGLSSLVGVTWGLAIFTPLGLSTVYIFALFNSLQGVFICCWFTILYLPSQSTTVSSSTARLDQAHSASQE.

A signal peptide spans 1-20 (MATPRGLGALLLLLLLPTSG). The Extracellular segment spans residues 21-270 (QEKPTEGPRN…DQSTVHILTR (250 aa)). Asn-98, Asn-144, and Asn-210 each carry an N-linked (GlcNAc...) asparagine glycan. In terms of domain architecture, GAIN-B spans 107-262 (FYFSLEPSQV…ALLLRPTLDQ (156 aa)). Intrachain disulfides connect Cys-215/Cys-244 and Cys-233/Cys-246. The segment at 215-262 (CVFWDVTKGTTGDWSSEGCSTEVRPEGTVCCCDHLTFFALLLRPTLDQ) is GPS. A stachel region spans residues 251-259 (FFALLLRPT). A helical membrane pass occupies residues 271-295 (ISQAGCGVSMIFLAFTIILYAFLRL). At 296–304 (SRERFKSED) the chain is on the cytoplasmic side. Residues 305-326 (APKIHVALGGSLFLLNLAFLVN) form a helical membrane-spanning segment. Topologically, residues 327 to 338 (VGSGSKGSDAAC) are extracellular. A disulfide bridge links Cys-338 with Cys-420. A helical transmembrane segment spans residues 339-364 (WARGAVFHYFLLCAFTWMGLEAFHLY). The Cytoplasmic segment spans residues 365-378 (LLAVRVFNTYFGHY). A helical transmembrane segment spans residues 379-400 (FLKLSLVGWGLPALMVIGTGSA). Residues 401–428 (NSYGLYTIRDRENRTSLELCWFREGTTM) are Extracellular-facing. N-linked (GlcNAc...) asparagine glycosylation occurs at Asn-413. Residues 429-454 (YALYITVHGYFLITFLFGMVVLALVV) traverse the membrane as a helical segment. The Cytoplasmic portion of the chain corresponds to 455-474 (WKIFTLSRATAVKERGKNRK). The helical transmembrane segment at 475 to 495 (KVLTLLGLSSLVGVTWGLAIF) threads the bilayer. Residues 496–501 (TPLGLS) lie on the Extracellular side of the membrane. Residues 502–525 (TVYIFALFNSLQGVFICCWFTILY) traverse the membrane as a helical segment. Asn-510 contacts cortisol. The Cytoplasmic portion of the chain corresponds to 526-549 (LPSQSTTVSSSTARLDQAHSASQE).

It belongs to the G-protein coupled receptor 2 family. Adhesion G-protein coupled receptor (ADGR) subfamily. As to quaternary structure, heterodimer of 2 chains generated by proteolytic processing; the large extracellular N-terminal fragment and the membrane-bound C-terminal fragment predominantly remain associated and non-covalently linked. Interacts with PRTN3; this interaction induces the activation of PAR2. Interacts with GNAO1 (when palmitoylated). In terms of processing, autoproteolytically processed at the GPS region of the GAIN-B domain; this cleavage modulates receptor activity. Post-translationally, O- and N-glycosylated. In terms of tissue distribution, expressed in cultured primary dermal lymphatic endothelial cells. Highly expressed in polymorphonuclear cells (PMNs) including neutrophilic, eosinophilic, and basophilic granulocytes.

Its subcellular location is the cell membrane. Its activity is regulated as follows. Forms a heterodimer of 2 chains generated by proteolytic processing that remain associated through non-covalent interactions mediated by the GAIN-B domain. In the inactivated receptor, the Stachel sequence (also named stalk) is embedded in the GAIN-B domain, where it adopts a beta-strand conformation. On activation, the Stachel moves into the 7 transmembrane region and adopts a twisted hook-shaped configuration that forms contacts within the receptor, leading to coupling of a G-alpha protein, which activates signaling. The cleaved GAIN-B and N-terminal domains can then dissociate from the rest of the receptor. Functionally, adhesion G-protein coupled receptor (aGPCR) for glucocorticoid hormones such as cortisol, cortisone and 11-deoxycortisol. Ligand binding causes a conformation change that triggers signaling via guanine nucleotide-binding proteins (G proteins) and modulates the activity of downstream effectors, such as adenylate cyclase. ADGRG3/GPR97 is coupled to G(o)/GNAO1 G proteins and mediates signaling by inhibiting adenylate cyclase activity. May also signal through G-alpha(q)-proteins; additional evidence are however required to confirm this result in vivo. Plays a role in the regulation of various processes including B-cell development, inflammation or innate immunity. Regulates migration of lymphatic endothelial cells in vitro via the small GTPases RhoA and CDC42. Antibody ligation leads to the production and activation of antimicrobial mediators like reactive oxygen species (ROS) and myeloperoxidase (MPO) as well as enhanced bacteria uptake and killing by granulocytes. Additionally, collaborates with protease-activated receptor 2/PAR2 to stimulate neutrophil-driven antimicrobial responses and endothelial cell activation. This is Adhesion G protein-coupled receptor G3 from Homo sapiens (Human).